Reading from the N-terminus, the 490-residue chain is Ribulose bisphosphate carboxylase large chain (490 aa).

Asn127 and Thr177 together coordinate substrate. The active-site Proton acceptor is Lys179. Lys181 contacts substrate. Positions 205, 207, and 208 each coordinate Mg(2+). Lys205 is subject to N6-carboxylysine. His297 acts as the Proton acceptor in catalysis. Substrate is bound by residues Arg298, His330, and Ser382.

The protein belongs to the RuBisCO large chain family. Type I subfamily. Heterohexadecamer of 8 large chains and 8 small chains. Mg(2+) serves as cofactor.

The protein localises to the plastid. It is found in the chloroplast. The catalysed reaction is 2 (2R)-3-phosphoglycerate + 2 H(+) = D-ribulose 1,5-bisphosphate + CO2 + H2O. The enzyme catalyses D-ribulose 1,5-bisphosphate + O2 = 2-phosphoglycolate + (2R)-3-phosphoglycerate + 2 H(+). In terms of biological role, ruBisCO catalyzes two reactions: the carboxylation of D-ribulose 1,5-bisphosphate, the primary event in carbon dioxide fixation, as well as the oxidative fragmentation of the pentose substrate in the photorespiration process. Both reactions occur simultaneously and in competition at the same active site. This is Ribulose bisphosphate carboxylase large chain from Thalassiosira pseudonana (Marine diatom).